A 57-amino-acid polypeptide reads, in one-letter code: Large ribosomal subunit protein bL32 (57 aa).

The interval Met1–Lys23 is disordered.

Belongs to the bacterial ribosomal protein bL32 family.

The polypeptide is Large ribosomal subunit protein bL32 (Trichormus variabilis (strain ATCC 29413 / PCC 7937) (Anabaena variabilis)).